Reading from the N-terminus, the 302-residue chain is 4-diphosphocytidyl-2-C-methyl-D-erythritol kinase (302 aa).

Lysine 20 is a catalytic residue. 106–116 (PVASGVGGGSG) is a binding site for ATP. The active site involves aspartate 148.

It belongs to the GHMP kinase family. IspE subfamily.

It catalyses the reaction 4-CDP-2-C-methyl-D-erythritol + ATP = 4-CDP-2-C-methyl-D-erythritol 2-phosphate + ADP + H(+). It participates in isoprenoid biosynthesis; isopentenyl diphosphate biosynthesis via DXP pathway; isopentenyl diphosphate from 1-deoxy-D-xylulose 5-phosphate: step 3/6. Functionally, catalyzes the phosphorylation of the position 2 hydroxy group of 4-diphosphocytidyl-2C-methyl-D-erythritol. The chain is 4-diphosphocytidyl-2-C-methyl-D-erythritol kinase from Bartonella henselae (strain ATCC 49882 / DSM 28221 / CCUG 30454 / Houston 1) (Rochalimaea henselae).